We begin with the raw amino-acid sequence, 185 residues long: MLKAKILFVGPCESGKTVLANFLTESSDITEYNPTQGVRILEFENPHVTSNNKGTGCEFELWDCGGDSKFESCWPALMKDAHGVVIVFNADIPSHLKEIEMWYSCFVQQQFLQDSHCMLVAHHKPGSGGERGSLALSPPLNKLKLVHSNLEEDPEEVRVEFIKYLKSIINSMSESRDREEMLIIT.

GTP contacts are provided by residues G10 to T17, D63 to D67, and H123 to G126. S137 is subject to Phosphoserine.

Belongs to the small GTPase superfamily. Rab family. In terms of assembly, component of the IFT complex B, at least composed of IFT20, IFT22, IFT25, IFT27, IFT46, IFT52, TRAF3IP1/IFT54, IFT57, IFT74, IFT80, IFT81, and IFT88. Interacts with IFT88. Interacts with CFAP61.

The protein resides in the cell projection. It is found in the cilium. Small GTPase-like component of the intraflagellar transport (IFT) complex B. The protein is Intraflagellar transport protein 22 homolog (Ift22) of Mus musculus (Mouse).